The sequence spans 532 residues: Pentatricopeptide repeat-containing protein At4g02820, mitochondrial (532 aa).

The N-terminal 28 residues, 1–28 (MNKNMLVRSARPTLASIHRLFSAAAAAT), are a transit peptide targeting the mitochondrion. Residues 35–56 (PVVKPRSGGGKGGESANKKETV) are disordered. PPR repeat units lie at residues 161-195 (GHAA…GFLK), 196-226 (SCLP…LKIR), 230-264 (DIVT…KLNP), 265-295 (DWVT…MEKL), 300-330 (NRVA…VKSS), 335-365 (NDAE…WESV), 370-404 (DARI…GINP), 405-435 (SYST…AIDS), 442-472 (NVRL…LQKA), and 476-512 (NTQL…DEET).

The protein belongs to the PPR family. P subfamily.

It localises to the mitochondrion. This chain is Pentatricopeptide repeat-containing protein At4g02820, mitochondrial, found in Arabidopsis thaliana (Mouse-ear cress).